Here is a 111-residue protein sequence, read N- to C-terminus: uncharacterized protein (111 aa).

The disordered stretch occupies residues 1–26; it reads MDLKDGVEEEEGAGENGKGGTHAQRV.

This is an uncharacterized protein from Caenorhabditis elegans.